The chain runs to 324 residues: tRNA N6-adenosine threonylcarbamoyltransferase (324 aa).

Fe cation contacts are provided by histidine 107, histidine 111, and tyrosine 127. Residues 127–131 (YVSGG), aspartate 159, glycine 172, glutamate 176, and asparagine 257 contribute to the substrate site. Aspartate 285 contributes to the Fe cation binding site.

It belongs to the KAE1 / TsaD family. Monomer. Component of the KEOPS complex that consists of Kae1, Bud32, Cgi121 and Pcc1; the whole complex dimerizes. Fe(2+) serves as cofactor.

The protein resides in the cytoplasm. It carries out the reaction L-threonylcarbamoyladenylate + adenosine(37) in tRNA = N(6)-L-threonylcarbamoyladenosine(37) in tRNA + AMP + H(+). Its function is as follows. Required for the formation of a threonylcarbamoyl group on adenosine at position 37 (t(6)A37) in tRNAs that read codons beginning with adenine. Is a component of the KEOPS complex that is probably involved in the transfer of the threonylcarbamoyl moiety of threonylcarbamoyl-AMP (TC-AMP) to the N6 group of A37. Kae1 likely plays a direct catalytic role in this reaction, but requires other protein(s) of the complex to fulfill this activity. This chain is tRNA N6-adenosine threonylcarbamoyltransferase, found in Pyrococcus furiosus (strain ATCC 43587 / DSM 3638 / JCM 8422 / Vc1).